Here is a 571-residue protein sequence, read N- to C-terminus: Polypeptide N-acetylgalactosaminyltransferase 2 (571 aa).

The Cytoplasmic segment spans residues 1-6 (MRRRSR). Residues 7–24 (MLLCFAFLWVLGIAYYMY) form a helical; Signal-anchor for type II membrane protein membrane-spanning segment. Residues 25 to 571 (SGGGSALAGG…QWKFTLNLQQ (547 aa)) lie on the Lumenal side of the membrane. Serine 29 carries O-linked (Xyl...) (chondroitin sulfate) serine glycosylation. Residues 53-66 (KKDLHHSNGEEKAQ) are compositionally biased toward basic and acidic residues. Residues 53 to 74 (KKDLHHSNGEEKAQSMETLPPG) form a disordered region. 4 disulfide bridges follow: cysteine 126-cysteine 354, cysteine 345-cysteine 423, cysteine 456-cysteine 473, and cysteine 496-cysteine 513. The tract at residues 135-240 (LPATSVVITF…EHWLEPLLER (106 aa)) is catalytic subdomain A. Residues threonine 143, aspartate 176, and arginine 201 each coordinate substrate. A Mn(2+)-binding site is contributed by aspartate 224. Substrate is bound at residue serine 225. Histidine 226 is a binding site for Mn(2+). The catalytic subdomain B stretch occupies residues 300–362 (PIKTPMIAGG…PCSRVGHVFR (63 aa)). Tryptophan 331 lines the substrate pocket. Histidine 359 provides a ligand contact to Mn(2+). Arginine 362, histidine 365, and tyrosine 367 together coordinate substrate. Residues 443–566 (QDIAFGALQQ…PALSQQWKFT (124 aa)) enclose the Ricin B-type lectin domain. Serine 536 bears the Phosphoserine mark. Residues cysteine 539 and cysteine 555 are joined by a disulfide bond.

The protein belongs to the glycosyltransferase 2 family. GalNAc-T subfamily. Mn(2+) is required as a cofactor. Detected in urine (at protein level). Widely expressed.

Its subcellular location is the golgi apparatus. It is found in the golgi stack membrane. The protein resides in the secreted. The catalysed reaction is L-seryl-[protein] + UDP-N-acetyl-alpha-D-galactosamine = a 3-O-[N-acetyl-alpha-D-galactosaminyl]-L-seryl-[protein] + UDP + H(+). It carries out the reaction L-threonyl-[protein] + UDP-N-acetyl-alpha-D-galactosamine = a 3-O-[N-acetyl-alpha-D-galactosaminyl]-L-threonyl-[protein] + UDP + H(+). It participates in protein modification; protein glycosylation. In terms of biological role, catalyzes the initial reaction in O-linked oligosaccharide biosynthesis, the transfer of an N-acetyl-D-galactosamine residue to a serine or threonine residue on the protein receptor. Has a broad spectrum of substrates for peptides such as EA2, Muc5AC, Muc1a, Muc1b. Probably involved in O-linked glycosylation of the immunoglobulin A1 (IgA1) hinge region. Involved in O-linked glycosylation of APOC-III, ANGPTL3 and PLTP. It participates in the regulation of HDL-C metabolism. The polypeptide is Polypeptide N-acetylgalactosaminyltransferase 2 (GALNT2) (Homo sapiens (Human)).